The following is a 147-amino-acid chain: Allograft inflammatory factor 1 (147 aa).

An N-acetylserine modification is found at S2. An N6-acetyllysine modification is found at K11. At S39 the chain carries Phosphoserine. 2 consecutive EF-hand domains span residues 45–80 (SKLEGFKEKYMEFDLNGNGDIDIMSLKRMLEKLGVP) and 81–115 (KTHLELKKLIGEVSSGSGETFSYPDFLRMMLGKRS). Residues D58, N60, N62, D64, T100, and D105 each coordinate Ca(2+). The disordered stretch occupies residues 128–147 (AREKEKPTGPPAKKAISELP).

Homodimer (Potential). Monomer. Interacts with LCP1. In terms of processing, phosphorylated on serine residues.

The protein resides in the cytoplasm. Its subcellular location is the cytoskeleton. It localises to the cell projection. The protein localises to the ruffle membrane. It is found in the phagocytic cup. Functionally, actin-binding protein that enhances membrane ruffling and RAC activation. Enhances the actin-bundling activity of LCP1. Binds calcium. Plays a role in RAC signaling and in phagocytosis. May play a role in macrophage activation and function. Promotes the proliferation of vascular smooth muscle cells and of T-lymphocytes. Enhances lymphocyte migration. Plays a role in vascular inflammation. This chain is Allograft inflammatory factor 1 (AIF1), found in Macaca mulatta (Rhesus macaque).